The sequence spans 453 residues: F-box protein At4g27050 (453 aa).

Positions 3–51 (TDLISNLPDDVLGKILSLVPTKLAAATSVLSKRWRNLLPLVDSLDFDET) constitute an F-box domain.

Part of a SCF (ASK-cullin-F-box) protein ligase complex.

The protein operates within protein modification; protein ubiquitination. Its function is as follows. Component of SCF(ASK-cullin-F-box) E3 ubiquitin ligase complexes, which may mediate the ubiquitination and subsequent proteasomal degradation of target proteins. The chain is F-box protein At4g27050 from Arabidopsis thaliana (Mouse-ear cress).